The following is a 280-amino-acid chain: DCN1-like protein 4 (280 aa).

Residues 37-71 (GPESHGTACCSRAMPPRKKRRPTAGDDLSAKKSRQ) are disordered. Residues 89 to 275 (FSSKRCLEWF…LLDEFVEWYK (187 aa)) enclose the DCUN1 domain.

May interact (via the DCUN1 domain) with unneddylated cullins.

It localises to the nucleus. In terms of biological role, contributes to the neddylation of all cullins by transferring NEDD8 from N-terminally acetylated NEDD8-conjugating E2s enzyme to different cullin C-terminal domain-RBX complexes. The protein is DCN1-like protein 4 of Danio rerio (Zebrafish).